The following is a 49-amino-acid chain: Large ribosomal subunit protein bL33A (49 aa).

Belongs to the bacterial ribosomal protein bL33 family.

The sequence is that of Large ribosomal subunit protein bL33A from Leuconostoc mesenteroides subsp. mesenteroides (strain ATCC 8293 / DSM 20343 / BCRC 11652 / CCM 1803 / JCM 6124 / NCDO 523 / NBRC 100496 / NCIMB 8023 / NCTC 12954 / NRRL B-1118 / 37Y).